The following is a 258-amino-acid chain: Hemin import ATP-binding protein HmuV (258 aa).

In terms of domain architecture, ABC transporter spans 2–242 (LTAEKLCVER…SKIEELYDFP (241 aa)). 34-41 (GANGAGKS) contributes to the ATP binding site.

The protein belongs to the ABC transporter superfamily. Heme (hemin) importer (TC 3.A.1.14.5) family. The complex is composed of two ATP-binding proteins (HmuV), two transmembrane proteins (HmuU) and a solute-binding protein (HmuT).

It localises to the cell inner membrane. Functionally, part of the ABC transporter complex HmuTUV involved in hemin import. Responsible for energy coupling to the transport system. The sequence is that of Hemin import ATP-binding protein HmuV from Hydrogenovibrio crunogenus (strain DSM 25203 / XCL-2) (Thiomicrospira crunogena).